The following is a 414-amino-acid chain: tRNA(Ile)-lysidine synthase (414 aa).

13–18 (SGGIDS) is an ATP binding site.

Belongs to the tRNA(Ile)-lysidine synthase family.

The protein resides in the cytoplasm. The catalysed reaction is cytidine(34) in tRNA(Ile2) + L-lysine + ATP = lysidine(34) in tRNA(Ile2) + AMP + diphosphate + H(+). Functionally, ligates lysine onto the cytidine present at position 34 of the AUA codon-specific tRNA(Ile) that contains the anticodon CAU, in an ATP-dependent manner. Cytidine is converted to lysidine, thus changing the amino acid specificity of the tRNA from methionine to isoleucine. The protein is tRNA(Ile)-lysidine synthase of Thermotoga sp. (strain RQ2).